Consider the following 472-residue polypeptide: Methanethiol oxidase (472 aa).

This sequence belongs to the selenium-binding protein family.

The protein resides in the nucleus. It is found in the cytoplasm. The protein localises to the cytosol. It localises to the membrane. It carries out the reaction methanethiol + O2 + H2O = hydrogen sulfide + formaldehyde + H2O2 + H(+). It participates in organosulfur degradation. Functionally, catalyzes the oxidation of methanethiol, an organosulfur compound known to be produced in substantial amounts by gut bacteria. Selenium-binding protein which may be involved in the sensing of reactive xenobiotics in the cytoplasm. May be involved in intra-Golgi protein transport. The sequence is that of Methanethiol oxidase (selenbp1-b) from Xenopus laevis (African clawed frog).